We begin with the raw amino-acid sequence, 1005 residues long: PH and SEC7 domain-containing protein 4 (1005 aa).

A disordered region spans residues 27 to 66; sequence YPSEIHGHPGPSEPCQEHTCPFDPPESARPDAPHGNSGVE. Phosphoserine occurs at positions 85, 88, and 97. 4 disordered regions span residues 145–189, 287–386, 407–525, and 694–714; these read PSKD…PGSS, LALG…NRGE, TSLL…SSSR, and EEDADRPEKDQPSPSAGKISS. Residues 161-177 are compositionally biased toward acidic residues; it reads EEDEDSGDDSSGPEEEN. Low complexity predominate over residues 350-361; the sequence is SQTSQSLSDLTQ. Serine 381 and serine 435 each carry phosphoserine. The segment covering 428-438 has biased composition (low complexity); it reads PVSSQDSSPRV. 2 stretches are compositionally biased toward basic and acidic residues: residues 453-465 and 476-488; these read LQKDRSELSSLKE and QEAECEDTSRSED. The 194-residue stretch at 493–686 folds into the SEC7 domain; it reads QHHVHLASAE…KALYWSIRSE (194 aa). Positions 726–841 constitute a PH domain; that stretch reads PTYKQGILAR…WIARINLAAA (116 aa). Residues 870–926 are a coiled coil; sequence SSLEEQHRSHENCLDAASDDLLDLQRNLPERRGRSRELEEYRLRKEYLEHEKTRYET. The tract at residues 951 to 1005 is disordered; it reads KETDGSQEPRPSLKKSHSSPSLHQEEAPTTAKVKRNISERRTYRKIIPKRNRNQL. Phosphoserine occurs at positions 968 and 971. The span at 992–1005 shows a compositional bias: basic residues; sequence TYRKIIPKRNRNQL.

Its subcellular location is the cell membrane. The protein resides in the cell projection. It localises to the ruffle membrane. In terms of biological role, guanine nucleotide exchange factor for ARF6 and ARL14/ARF7. Through ARL14 activation, controls the movement of MHC class II-containing vesicles along the actin cytoskeleton in dendritic cells. Involved in membrane recycling. Interacts with several phosphatidylinositol phosphate species, including phosphatidylinositol 3,4-bisphosphate, phosphatidylinositol 3,5-bisphosphate and phosphatidylinositol 4,5-bisphosphate. This is PH and SEC7 domain-containing protein 4 (Psd4) from Mus musculus (Mouse).